Here is an 852-residue protein sequence, read N- to C-terminus: Potassium voltage-gated channel subfamily KQT member 2 (852 aa).

Over M1 to G90 the chain is Cytoplasmic. S52 is modified (phosphoserine; by PKA). Residues W91–S113 traverse the membrane as a helical segment. At T114–E123 the chain is on the extracellular side. A helical membrane pass occupies residues G124–I145. At W146–F163 the chain is on the cytoplasmic side. A helical membrane pass occupies residues A164–L183. Topologically, residues A184–A196 are extracellular. The helical; Voltage-sensor transmembrane segment at L197–G215 threads the bilayer. R214 lines the a 1,2-diacyl-sn-glycero-3-phospho-(1D-myo-inositol-4,5-bisphosphate) pocket. The Cytoplasmic segment spans residues G216–A227. The interval G222–Q323 is mediates interaction with SLC5A3. The helical transmembrane segment at H228–A253 threads the bilayer. K230 contacts a 1,2-diacyl-sn-glycero-3-phospho-(1D-myo-inositol-4,5-bisphosphate). Residues E254–T263 lie on the Extracellular side of the membrane. The pore-forming intramembrane region spans Y264–T276. The short motif at T277–D282 is the Selectivity filter element. Over T277–T287 the chain is Extracellular. Residues W288–S314 form a helical membrane-spanning segment. Residues G315 to K852 lie on the Cytoplasmic side of the membrane. The mediates interaction with calmodulin stretch occupies residues A317 to S522. K327 contacts a 1,2-diacyl-sn-glycero-3-phospho-(1D-myo-inositol-4,5-bisphosphate). Residues T404–G469 are disordered. Positions P440–D457 are enriched in polar residues. Residues S448, S450, S454, S458, S460, and S489 each carry the phosphoserine modification. 3 disordered regions span residues G579 to S601, G643 to H662, and I672 to S718. Basic and acidic residues predominate over residues T583–A592. S655 carries the phosphoserine modification. A phosphoserine mark is found at S781 and S783. The disordered stretch occupies residues E818–K852.

Belongs to the potassium channel family. KQT (TC 1.A.1.15) subfamily. Kv7.2/KCNQ2 sub-subfamily. In terms of assembly, heterotetramer with KCNQ3; forms heterotetrameric M-channel responsible for the M-current. Homotetrameric; forms a functional homotetrameric channel resulting in the expression of a small M-current. Interacts with calmodulin; the interaction is calcium-independent, constitutive and participates in the proper assembly of a functional M-channel. May associate with KCNE2. Interacts with IQCJ-SCHIP1. Interacts (via the pore module) with SLC5A3/SMIT1; forms a coregulatory complex that alters ion selectivity, voltage dependence and gating kinetics of the channel. Interacts with AKAP5; the interaction may help KCNQ2 channel complex to retain calcium-bound calmodulin. Post-translationally, KCNQ2/KCNQ3 heteromeric current can be increased by intracellular cyclic AMP, an effect that depends on phosphorylation of Ser-52 in the N-terminal region. In terms of processing, KCNQ2/KCNQ3 are ubiquitinated by NEDD4L. Ubiquitination leads to protein degradation. Degradation induced by NEDD4L is inhibited by USP36. In terms of tissue distribution, expressed in brain and sympathetic ganglia. In brain, expressed in cortex, hippocampus, and cerebellum. In sympathetic ganglia, expressed at lower levels in celiac ganglia and superior mesenteric ganglia than in superior cervical ganglia.

The protein localises to the cell membrane. The enzyme catalyses K(+)(in) = K(+)(out). It catalyses the reaction Rb(+)(in) = Rb(+)(out). It carries out the reaction Cs(+)(in) = Cs(+)(out). The catalysed reaction is Na(+)(in) = Na(+)(out). With respect to regulation, phosphatidylinositol-4,5-bisphosphate (PIP2) potentiates the activation of KCNQ channels by enhancing the electro-mechanical coupling of the voltage-sensing domain (VSD) and the pore-forming domain (PD). In the closed state of the channel, PIP2 is anchored at the S2-S3 loop; upon channel activation, PIP2 interacts with the S4-S5 linker and is involved in channel gating. Calcium suppresses KCNQ2 and KCNQ2-KCNQ3 channel currents, with calcium-bound calmodulin inducing a change in channel configuration which leads to the reduction of channel affinity for PIP2 and subsequent current suppression. In terms of biological role, pore-forming subunit of the voltage-gated potassium (Kv) M-channel which is responsible for the M-current, a key controller of neuronal excitability. M-channel is composed of pore-forming subunits KCNQ2 and KCNQ3 assembled as heterotetramers. The native M-current has a slowly activating and deactivating potassium conductance which plays a critical role in determining the subthreshold electrical excitability of neurons as well as the responsiveness to synaptic inputs. M-channel is selectively permeable in vitro to other cations besides potassium, in decreasing order of affinity K(+) &gt; Rb(+) &gt; Cs(+) &gt; Na(+). M-channel association with SLC5A3/SMIT1 alters channel ion selectivity, increasing Na(+) and Cs(+) permeation relative to K(+). Suppressed by activation of the muscarinic acetylcholine receptor CHRM1. The polypeptide is Potassium voltage-gated channel subfamily KQT member 2 (Rattus norvegicus (Rat)).